Here is a 314-residue protein sequence, read N- to C-terminus: MAVLTTHEIDCIIKELTSLNGSECTLKEELIERLIQQTREVIKWQPMLLELQAPVNICGDIHGQFTDLLRIFKACGFPPKANYLFLGDYVDRGKQSLETICLLFAYKVKYPLNFFLLRGNHESASINKIYGFYDEIKRRHTVRLWHSFTDCFNWLPVAALVGERIFCCHGGLSPSLRNLQQINHIQRPTDIPDEGIMCDLLWADLNHTTKGWGHNDRGVSFTFDKVIVRDFLKAFDLQLMVRAHEVVEDGYEFFANRQLVTVFSAPNYCGMMNNAGGVMSVSTDLICSFVIILPCHKYKMIATDANQMPTNEEE.

Mn(2+)-binding residues include Asp60, His62, Asp88, and Asn120. His121 serves as the catalytic Proton donor. The Mn(2+) site is built by His169 and His244.

The protein belongs to the PPP phosphatase family. PP-Y subfamily. Mn(2+) is required as a cofactor.

It catalyses the reaction O-phospho-L-seryl-[protein] + H2O = L-seryl-[protein] + phosphate. The catalysed reaction is O-phospho-L-threonyl-[protein] + H2O = L-threonyl-[protein] + phosphate. The chain is Serine/threonine-protein phosphatase PP-Y (PpY-55A) from Drosophila melanogaster (Fruit fly).